An 862-amino-acid chain; its full sequence is MVSRSYSNLLDLASGNFHSFSREKKRFPRVATVTGVLSELDDDNNSNSVCSDAPSSVTQDRIIIVGNQLPIKSHRNSAGKLSFSWDNDSLLLQLKDGMREDMEVVYIGCLKEQIDTVEQDDVSQRLLENFKCVPAYIPPELFTKYYHGFCKQHLWPLFHYMLPLTPDLGGRFDRSLWQAYLSVNKIFADKVMEVISPDDDFVWVHDYHLMVLPTFLRKRFNRVKLGFFLHSPFPSSEIYRTLPVRNELLRALLNADLIGFHTFDYARHFLSCCSRMLGLSYQSKRGTIGLEYYGRTVSIKILPVGIHISQLQSILNLPETQTKVAELRDQFLDQKVLLGVDDMDIFKGISLKLLAMEQLLTQHPEKRGRVVLVQIANPARGRGKDVQEVQSETEATVKRINEMFGRPGYQPVVLIDTPLQFFERIAYYVIAECCLVTAVRDGMNLIPYEYIICRQGNPKLNETIGLDPSAAKKSMLVVSEFIGCSPSLSGAIRVNPWNIDAVTEAMDYALIVSEAEKQMRHEKHHKYVSTHDVAYWARSFIQDLERACGDHVRKRCWGIGFGLGFRVVALDPSFKKLSIEHIVSAYKRTKNRAILLDYDGTMVQPGSIRTTPTRETIEILNNLSSDPKNIVYLVSGKDRRTLTEWFSSCDDLGLGAEHGYFIRPNDGTDWETSSLVSGFEWKQIAEPVMRLYTETTDGSTIETKETALVWNYQFADPDFGSCQAKELMEHLESVLTNDPVSVKTGQQLVEVKPQGVNKGLVAERLLTTMQEKGKLLDFILCVGDDRSDEDMFEVIMSAKDGPALSPVAEIFACTVGQKPSKAKYYLDDTAEIIRMLDGLAATNTTISDQTDSTATVPTKDLF.

Residue S5 is modified to Phosphoserine. The residue at position 32 (T32) is a Phosphothreonine. Residues 60–546 are glycosyltransferase; the sequence is DRIIIVGNQL…ARSFIQDLER (487 aa).

This sequence in the N-terminal section; belongs to the glycosyltransferase 20 family. The protein in the C-terminal section; belongs to the trehalose phosphatase family. Binds to the phosphopeptide-binding site of GRF/14-3-3 and to MBF1c. Both Ser-5 and Thr-32 must be phosphorylated for binding to GRF/14-3-3. Low expression in leaves, stems, flower buds, flowers and siliques.

The enzyme catalyses D-glucose 6-phosphate + UDP-alpha-D-glucose = alpha,alpha-trehalose 6-phosphate + UDP + H(+). The chain is Alpha,alpha-trehalose-phosphate synthase [UDP-forming] 5 (TPS5) from Arabidopsis thaliana (Mouse-ear cress).